The chain runs to 228 residues: Thermonuclease (228 aa).

A signal peptide spans methionine 1–alanine 23. A propeptide spanning residues isoleucine 24–alanine 60 is cleaved from the precursor. The segment covering alanine 58–serine 70 has biased composition (polar residues). Residues alanine 58–threonine 83 form a disordered region. Aspartate 100 is a Ca(2+) binding site. The active site involves arginine 114. The Ca(2+) site is built by aspartate 119 and threonine 120. Residues glutamate 122 and arginine 166 contribute to the active site.

This sequence belongs to the thermonuclease family. Ca(2+) is required as a cofactor.

Its subcellular location is the secreted. The catalysed reaction is Endonucleolytic cleavage to nucleoside 3'-phosphates and 3'-phosphooligonucleotide end-products.. In terms of biological role, enzyme that catalyzes the hydrolysis of both DNA and RNA at the 5' position of the phosphodiester bond. This Staphylococcus aureus (strain Mu50 / ATCC 700699) protein is Thermonuclease (nuc).